The primary structure comprises 136 residues: Urease subunit beta (136 aa).

This sequence belongs to the urease beta subunit family. In terms of assembly, heterotrimer of UreA (gamma), UreB (beta) and UreC (alpha) subunits. Three heterotrimers associate to form the active enzyme.

The protein localises to the cytoplasm. The enzyme catalyses urea + 2 H2O + H(+) = hydrogencarbonate + 2 NH4(+). The protein operates within nitrogen metabolism; urea degradation; CO(2) and NH(3) from urea (urease route): step 1/1. In Staphylococcus aureus (strain Mu3 / ATCC 700698), this protein is Urease subunit beta.